The primary structure comprises 554 residues: Glucose-6-phosphate isomerase (554 aa).

E359 serves as the catalytic Proton donor. Active-site residues include H390 and K518.

This sequence belongs to the GPI family.

Its subcellular location is the cytoplasm. It carries out the reaction alpha-D-glucose 6-phosphate = beta-D-fructose 6-phosphate. The protein operates within carbohydrate biosynthesis; gluconeogenesis. It functions in the pathway carbohydrate degradation; glycolysis; D-glyceraldehyde 3-phosphate and glycerone phosphate from D-glucose: step 2/4. Its function is as follows. Catalyzes the reversible isomerization of glucose-6-phosphate to fructose-6-phosphate. In Pseudomonas putida (strain W619), this protein is Glucose-6-phosphate isomerase.